A 104-amino-acid chain; its full sequence is Large ribosomal subunit protein uL24 (104 aa).

The protein belongs to the universal ribosomal protein uL24 family. In terms of assembly, part of the 50S ribosomal subunit.

In terms of biological role, one of two assembly initiator proteins, it binds directly to the 5'-end of the 23S rRNA, where it nucleates assembly of the 50S subunit. Its function is as follows. One of the proteins that surrounds the polypeptide exit tunnel on the outside of the subunit. The protein is Large ribosomal subunit protein uL24 of Azotobacter vinelandii (strain DJ / ATCC BAA-1303).